The following is a 352-amino-acid chain: Thiamine-monophosphate kinase (352 aa).

Mg(2+)-binding residues include aspartate 58, threonine 73, and aspartate 75. A substrate-binding site is contributed by histidine 82. Positions 103 and 151 each coordinate Mg(2+). ATP-binding positions include glycine 150–aspartate 151 and arginine 177. Aspartate 239 provides a ligand contact to Mg(2+). Position 241 (serine 241) interacts with ATP. Aspartate 242 serves as a coordination point for Mg(2+). The substrate site is built by aspartate 294 and tryptophan 349.

The protein belongs to the thiamine-monophosphate kinase family.

It carries out the reaction thiamine phosphate + ATP = thiamine diphosphate + ADP. It functions in the pathway cofactor biosynthesis; thiamine diphosphate biosynthesis; thiamine diphosphate from thiamine phosphate: step 1/1. Its function is as follows. Catalyzes the ATP-dependent phosphorylation of thiamine-monophosphate (TMP) to form thiamine-pyrophosphate (TPP), the active form of vitamin B1. The polypeptide is Thiamine-monophosphate kinase (Caulobacter vibrioides (strain ATCC 19089 / CIP 103742 / CB 15) (Caulobacter crescentus)).